A 323-amino-acid chain; its full sequence is o-succinylbenzoate synthase (323 aa).

The active-site Proton donor is the lysine 134. 3 residues coordinate Mg(2+): aspartate 162, glutamate 191, and aspartate 214. Lysine 236 serves as the catalytic Proton acceptor.

It belongs to the mandelate racemase/muconate lactonizing enzyme family. MenC type 1 subfamily. A divalent metal cation serves as cofactor.

It catalyses the reaction (1R,6R)-6-hydroxy-2-succinyl-cyclohexa-2,4-diene-1-carboxylate = 2-succinylbenzoate + H2O. The protein operates within quinol/quinone metabolism; 1,4-dihydroxy-2-naphthoate biosynthesis; 1,4-dihydroxy-2-naphthoate from chorismate: step 4/7. It participates in quinol/quinone metabolism; menaquinone biosynthesis. Converts 2-succinyl-6-hydroxy-2,4-cyclohexadiene-1-carboxylate (SHCHC) to 2-succinylbenzoate (OSB). This chain is o-succinylbenzoate synthase, found in Yersinia pestis bv. Antiqua (strain Antiqua).